We begin with the raw amino-acid sequence, 183 residues long: Translation initiation factor IF-3 (183 aa).

Belongs to the IF-3 family. In terms of assembly, monomer.

The protein resides in the cytoplasm. Functionally, IF-3 binds to the 30S ribosomal subunit and shifts the equilibrium between 70S ribosomes and their 50S and 30S subunits in favor of the free subunits, thus enhancing the availability of 30S subunits on which protein synthesis initiation begins. The protein is Translation initiation factor IF-3 of Pseudomonas aeruginosa (strain ATCC 15692 / DSM 22644 / CIP 104116 / JCM 14847 / LMG 12228 / 1C / PRS 101 / PAO1).